Here is a 235-residue protein sequence, read N- to C-terminus: Ribonuclease 3 (235 aa).

Positions 6–131 (IDQLKKLTGH…LIAVIYLDGG (126 aa)) constitute an RNase III domain. Position 44 (Glu-44) interacts with Mg(2+). The active site involves Asp-48. Mg(2+)-binding residues include Asp-117 and Glu-120. Residue Glu-120 is part of the active site. The DRBM domain maps to 156-225 (DAKTELQEWA…AEKILRREGM (70 aa)).

The protein belongs to the ribonuclease III family. In terms of assembly, homodimer. Mg(2+) is required as a cofactor.

The protein resides in the cytoplasm. It catalyses the reaction Endonucleolytic cleavage to 5'-phosphomonoester.. Digests double-stranded RNA. Involved in the processing of primary rRNA transcript to yield the immediate precursors to the large and small rRNAs (23S and 16S). Processes some mRNAs, and tRNAs when they are encoded in the rRNA operon. Processes pre-crRNA and tracrRNA of type II CRISPR loci if present in the organism. This Bartonella bacilliformis (strain ATCC 35685 / KC583 / Herrer 020/F12,63) protein is Ribonuclease 3.